Reading from the N-terminus, the 323-residue chain is Beta-ketoacyl-[acyl-carrier-protein] synthase III (323 aa).

Active-site residues include C112 and H248. The tract at residues 249–253 is ACP-binding; the sequence is QANRR. N278 is an active-site residue.

Belongs to the thiolase-like superfamily. FabH family. As to quaternary structure, homodimer.

Its subcellular location is the cytoplasm. It carries out the reaction malonyl-[ACP] + acetyl-CoA + H(+) = 3-oxobutanoyl-[ACP] + CO2 + CoA. Its pathway is lipid metabolism; fatty acid biosynthesis. Functionally, catalyzes the condensation reaction of fatty acid synthesis by the addition to an acyl acceptor of two carbons from malonyl-ACP. Catalyzes the first condensation reaction which initiates fatty acid synthesis and may therefore play a role in governing the total rate of fatty acid production. Possesses both acetoacetyl-ACP synthase and acetyl transacylase activities. Its substrate specificity determines the biosynthesis of branched-chain and/or straight-chain of fatty acids. The sequence is that of Beta-ketoacyl-[acyl-carrier-protein] synthase III from Streptococcus agalactiae serotype Ia (strain ATCC 27591 / A909 / CDC SS700).